The following is a 740-amino-acid chain: Isocitrate dehydrogenase [NADP] 2 (740 aa).

Positions 83 and 85 each coordinate NADP(+). D-threo-isocitrate contacts are provided by serine 130, asparagine 133, arginine 137, arginine 143, and lysine 253. Position 133 (asparagine 133) interacts with NADP(+). Position 348 (aspartate 348) interacts with Mg(2+). D-threo-isocitrate is bound by residues tyrosine 418 and arginine 546. The Mg(2+) site is built by aspartate 547 and aspartate 551. Residues serine 584, histidine 588, arginine 599, aspartate 601, and arginine 648 each coordinate NADP(+).

Belongs to the monomeric-type IDH family. As to quaternary structure, monomer. Mg(2+) is required as a cofactor. It depends on Mn(2+) as a cofactor.

The catalysed reaction is D-threo-isocitrate + NADP(+) = 2-oxoglutarate + CO2 + NADPH. IDH activity is not significantly affected by monovalent cations. The combined addition of Mn(2+) and another divalent cation results in the decrease of the activity. Catalyzes the oxidative decarboxylation of isocitrate to 2-oxoglutarate and carbon dioxide with the concomitant reduction of NADP(+). Cannot use NAD(+). This is Isocitrate dehydrogenase [NADP] 2 from Psychrobacter sp. (strain 13A).